Here is a 278-residue protein sequence, read N- to C-terminus: 4-hydroxy-tetrahydrodipicolinate reductase (278 aa).

Residues 13–18 (GAAGKM) and 111–113 (GTT) contribute to the NAD(+) site. His-167 acts as the Proton donor/acceptor in catalysis. His-168 is a (S)-2,3,4,5-tetrahydrodipicolinate binding site. Residue Lys-171 is the Proton donor of the active site. 177-178 (GT) is a (S)-2,3,4,5-tetrahydrodipicolinate binding site.

Belongs to the DapB family.

The protein resides in the cytoplasm. It carries out the reaction (S)-2,3,4,5-tetrahydrodipicolinate + NAD(+) + H2O = (2S,4S)-4-hydroxy-2,3,4,5-tetrahydrodipicolinate + NADH + H(+). The catalysed reaction is (S)-2,3,4,5-tetrahydrodipicolinate + NADP(+) + H2O = (2S,4S)-4-hydroxy-2,3,4,5-tetrahydrodipicolinate + NADPH + H(+). It participates in amino-acid biosynthesis; L-lysine biosynthesis via DAP pathway; (S)-tetrahydrodipicolinate from L-aspartate: step 4/4. Functionally, catalyzes the conversion of 4-hydroxy-tetrahydrodipicolinate (HTPA) to tetrahydrodipicolinate. This is 4-hydroxy-tetrahydrodipicolinate reductase from Trichormus variabilis (strain ATCC 29413 / PCC 7937) (Anabaena variabilis).